Here is a 629-residue protein sequence, read N- to C-terminus: 1-deoxy-D-xylulose-5-phosphate synthase (629 aa).

Thiamine diphosphate contacts are provided by residues His-73 and 114-116 (GHA). Asp-145 contacts Mg(2+). Thiamine diphosphate is bound by residues 146–147 (GA), Asn-174, Tyr-284, and Glu-360. Asn-174 serves as a coordination point for Mg(2+).

It belongs to the transketolase family. DXPS subfamily. In terms of assembly, homodimer. Mg(2+) serves as cofactor. It depends on thiamine diphosphate as a cofactor.

It carries out the reaction D-glyceraldehyde 3-phosphate + pyruvate + H(+) = 1-deoxy-D-xylulose 5-phosphate + CO2. Its pathway is metabolic intermediate biosynthesis; 1-deoxy-D-xylulose 5-phosphate biosynthesis; 1-deoxy-D-xylulose 5-phosphate from D-glyceraldehyde 3-phosphate and pyruvate: step 1/1. Catalyzes the acyloin condensation reaction between C atoms 2 and 3 of pyruvate and glyceraldehyde 3-phosphate to yield 1-deoxy-D-xylulose-5-phosphate (DXP). The chain is 1-deoxy-D-xylulose-5-phosphate synthase from Thermomicrobium roseum (strain ATCC 27502 / DSM 5159 / P-2).